A 366-amino-acid polypeptide reads, in one-letter code: Inactive protein RESTRICTED TEV MOVEMENT 2 (366 aa).

Residues 14-121 (VQYEDFVPKS…LPETSRTEAA (108 aa)) enclose the sHSP domain. Residues 129-133 (LEEKR) form an A-1 repeat. A 6 X 5 AA repeats A of L-E-E-[SKR]-[ERK] region spans residues 129 to 220 (LEEKRLLEES…LEERRLEERK (92 aa)). An A-2 repeat occupies 135 to 139 (LEESR). One copy of the A-3 repeat lies at 156–160 (LEEKE). One copy of the B-1 repeat lies at 163–176 (IRKLQEEAKAKEEA). Positions 163-206 (IRKLQEEAKAKEEAEMRKLQEEAKANEEAAAKKLQEEIEAKEKL) are 3 X 14 AA repeats B of [IMA]-[RK]-K-L-Q-E-E-A-K-A-K-E-[EK]-[LA]. The B-2 repeat unit spans residues 178-191 (MRKLQEEAKANEEA). The stretch at 193–205 (AKKLQEEIEAKEK) is one B-3 repeat. The stretch at 206–210 (LEERK) is one A-4 repeat. An A-5 repeat occupies 211–215 (LEERR). The A-6 repeat unit spans residues 216–220 (LEERK). A helical transmembrane segment spans residues 322-342 (LMMNVGVAALVIFALGAYVSY). Positions 345–366 (CSSSSSSSSSSPSSSSSSTKPE) are disordered. The segment covering 346-366 (SSSSSSSSSSPSSSSSSTKPE) has biased composition (low complexity).

It belongs to the small heat shock protein (HSP20) family.

The protein resides in the cell membrane. Its function is as follows. Seems to not be involved in heat resistance. Unable to mediate restriction of long-distance movement of the pathogenic tobacco etch virus (TEV) without causing a hypersensitive response or inducing systemic acquired resistance. This Arabidopsis thaliana (Mouse-ear cress) protein is Inactive protein RESTRICTED TEV MOVEMENT 2 (RTM2).